The primary structure comprises 110 residues: Bowman-Birk type proteinase inhibitor (110 aa).

An N-terminal signal peptide occupies residues Met1–Ser19. Positions Ala20–Asn39 are excised as a propeptide. 7 disulfides stabilise this stretch: Cys47–Cys101, Cys48–Cys63, Cys51–Cys97, Cys53–Cys61, Cys71–Cys78, Cys75–Cys90, and Cys80–Cys88.

It belongs to the Bowman-Birk serine protease inhibitor family.

In terms of biological role, inhibitor of trypsin and of chymotrypsin. This Glycine max (Soybean) protein is Bowman-Birk type proteinase inhibitor.